Consider the following 111-residue polypeptide: Probable 4-amino-4-deoxy-L-arabinose-phosphoundecaprenol flippase subunit ArnE (111 aa).

Helical transmembrane passes span 38 to 58, 61 to 81, and 91 to 111; these read LWLGLALICMGAAMVLWLLVL, LPVGIAYPMLSLNFVWVTLAA, and PRHWLGVALIISGIIILGSAA. Positions 40 to 109 constitute an EamA domain; that stretch reads LGLALICMGA…IISGIIILGS (70 aa).

This sequence belongs to the ArnE family. Heterodimer of ArnE and ArnF.

The protein resides in the cell inner membrane. It functions in the pathway bacterial outer membrane biogenesis; lipopolysaccharide biosynthesis. In terms of biological role, translocates 4-amino-4-deoxy-L-arabinose-phosphoundecaprenol (alpha-L-Ara4N-phosphoundecaprenol) from the cytoplasmic to the periplasmic side of the inner membrane. This is Probable 4-amino-4-deoxy-L-arabinose-phosphoundecaprenol flippase subunit ArnE from Salmonella choleraesuis (strain SC-B67).